A 490-amino-acid polypeptide reads, in one-letter code: ATP-dependent 6-phosphofructokinase (490 aa).

Residues G109, 175–176 (RG), and 200–203 (GDGT) each bind ATP. D201 lines the Mg(2+) pocket. Substrate contacts are provided by residues 229-231 (TID), 274-276 (MGR), E327, and 383-386 (YMIR). Residue D231 is the Proton acceptor of the active site. The short motif at 488-490 (SKL) is the Peroxisomal targeting signal element.

Belongs to the phosphofructokinase type A (PFKA) family. PPi-dependent PFK group II subfamily. Atypical ATP-dependent clade 'X' sub-subfamily. In terms of assembly, homotetramer. Requires Mg(2+) as cofactor.

Its subcellular location is the glycosome. It carries out the reaction beta-D-fructose 6-phosphate + ATP = beta-D-fructose 1,6-bisphosphate + ADP + H(+). It participates in carbohydrate degradation; glycolysis; D-glyceraldehyde 3-phosphate and glycerone phosphate from D-glucose: step 3/4. Its activity is regulated as follows. Allosterically activated by AMP. Functionally, catalyzes the phosphorylation of D-fructose 6-phosphate to fructose 1,6-bisphosphate by ATP, the first committing step of glycolysis. The chain is ATP-dependent 6-phosphofructokinase from Trypanoplasma borreli.